The chain runs to 449 residues: MIAARGAPEIEKAKLRLEIAELQAVLNAKEQQLLELQSTISTGASNGGEPESKQDHQKLSNDDIARYSRQLILPDFGIGGQLKLKNSAVLIVGIGGLGCPAAQYLAGAGCGSLGLVDYDQVERSNLHRQTLHTVARCGLSKAESARIALLELNPHCHITCHASLLNRFNAMDIMHGYDVVLDCSDNVATRYLLNDACVMLGKPLVSGSALKLDGQITVYNYGTQGPCYRCIFPVPPPPEAVTNCGDGGVLGAVTGTIGAMQALEAIKLIVGLGDVLAGRLLIFDGSSCQFRNIRIRSKRANCHVCSDQPLITQLIDYEVFCGMHATDKDNPLQLLEPEQRITVVDYQKSLQDKPHLLLDVRAQAEFEICQLPQAINVPLAQILDGSYLQQLDAQFKSSGFPIVVVCRRGNDSQIAVQHMKNQFPEHFIRDLKGGLHAWTNQIDENFPIY.

Residues Gly-96, Asp-117, 124-128 (SNLHR), Lys-141, and 185-186 (DN) each bind ATP. Zn(2+)-binding residues include Cys-227 and Cys-230. Cys-244 serves as the catalytic Glycyl thioester intermediate; for adenylyltransferase activity. Positions 302 and 305 each coordinate Zn(2+). Positions 351–447 (QDKPHLLLDV…WTNQIDENFP (97 aa)) constitute a Rhodanese domain. The active-site Cysteine persulfide intermediate; for sulfurtransferase activity is the Cys-406.

In the N-terminal section; belongs to the HesA/MoeB/ThiF family. UBA4 subfamily. The cofactor is Zn(2+).

The protein resides in the cytoplasm. Its subcellular location is the cytosol. The catalysed reaction is [molybdopterin-synthase sulfur-carrier protein]-C-terminal Gly-Gly + ATP + H(+) = [molybdopterin-synthase sulfur-carrier protein]-C-terminal Gly-Gly-AMP + diphosphate. It catalyses the reaction [molybdopterin-synthase sulfur-carrier protein]-C-terminal Gly-Gly-AMP + S-sulfanyl-L-cysteinyl-[cysteine desulfurase] + AH2 = [molybdopterin-synthase sulfur-carrier protein]-C-terminal-Gly-aminoethanethioate + L-cysteinyl-[cysteine desulfurase] + A + AMP + 2 H(+). It participates in tRNA modification; 5-methoxycarbonylmethyl-2-thiouridine-tRNA biosynthesis. It functions in the pathway cofactor biosynthesis; molybdopterin biosynthesis. Functionally, plays a central role in 2-thiolation of mcm(5)S(2)U at tRNA wobble positions of cytosolic tRNA(Lys), tRNA(Glu) and tRNA(Gln). Also essential during biosynthesis of the molybdenum cofactor. Acts by mediating the C-terminal thiocarboxylation of sulfur carriers URM1 and MOCS2A. Its N-terminus first activates URM1 and MOCS2A as acyl-adenylates (-COAMP), then the persulfide sulfur on the catalytic cysteine is transferred to URM1 and MOCS2A to form thiocarboxylation (-COSH) of their C-terminus. The reaction probably involves hydrogen sulfide that is generated from the persulfide intermediate and that acts as a nucleophile towards URM1 and MOCS2A. Subsequently, a transient disulfide bond is formed. Does not use thiosulfate as sulfur donor; NFS1 probably acting as a sulfur donor for thiocarboxylation reactions. This is Adenylyltransferase and sulfurtransferase MOCS3 from Drosophila grimshawi (Hawaiian fruit fly).